The primary structure comprises 231 residues: Uracil phosphoribosyltransferase (231 aa).

38-42 (KGLVR) lines the GTP pocket. Residues arginine 87, arginine 112, and 140–148 (DPMIATGST) each bind 5-phospho-alpha-D-ribose 1-diphosphate. Residues isoleucine 203 and 208–210 (GDA) contribute to the uracil site. Aspartate 209 contacts 5-phospho-alpha-D-ribose 1-diphosphate.

Belongs to the UPRTase family. Mg(2+) serves as cofactor.

It carries out the reaction UMP + diphosphate = 5-phospho-alpha-D-ribose 1-diphosphate + uracil. It functions in the pathway pyrimidine metabolism; UMP biosynthesis via salvage pathway; UMP from uracil: step 1/1. Its activity is regulated as follows. Allosterically activated by GTP. Functionally, catalyzes the conversion of uracil and 5-phospho-alpha-D-ribose 1-diphosphate (PRPP) to UMP and diphosphate. The chain is Uracil phosphoribosyltransferase from Methanococcus maripaludis (strain DSM 14266 / JCM 13030 / NBRC 101832 / S2 / LL).